Here is a 274-residue protein sequence, read N- to C-terminus: Proliferating cell nuclear antigen 1 (274 aa).

A DNA-binding region spans residues 61 to 80 (RCDRERVLGVNIASLNKVFK).

The protein belongs to the PCNA family. Homotrimer. Interacts with ORC1 (via PIP-box motif); the interaction occurs during DNA replication in trophozoites. Interacts with ORC5; the interaction occurs during the trophozoite stage but not at the late schizont stage. Interacts with FEN1.

The protein localises to the nucleus. The protein resides in the chromosome. It is found in the cytoplasm. Auxiliary protein of DNA polymerase delta and is involved in the control of DNA replication by increasing the polymerase processibility during elongation of the leading strand. Involved in DNA damage response. This Plasmodium falciparum (isolate 3D7) protein is Proliferating cell nuclear antigen 1.